A 470-amino-acid chain; its full sequence is Cell division protein FtsP (470 aa).

The segment at residues 1 to 27 is a signal peptide (tat-type signal); the sequence is MSLSRRQFIQASGIALCAGAVPLKASA. Residues 68-164 form the Plastocyanin-like domain; the sequence is WGINGRYLGP…NGLAGMWLVE (97 aa).

Belongs to the FtsP family. Post-translationally, exported by the Tat system. The position of the signal peptide cleavage has been experimentally proven. Can also be exported by the Sec system.

The protein localises to the periplasm. In terms of biological role, cell division protein that is required for growth during stress conditions. May be involved in protecting or stabilizing the divisomal assembly under conditions of stress. The protein is Cell division protein FtsP of Escherichia coli (strain K12).